Reading from the N-terminus, the 756-residue chain is U3 small nucleolar RNA-associated protein 25 homolog (756 aa).

A disordered region spans residues Met1–Asp159. Promotes p53/TP53 degradation stretches follow at residues Met1–Ala185 and Val573–Glu635. The residue at position 10 (Ser10) is a Phosphoserine. Over residues Arg25–Lys43 the composition is skewed to basic and acidic residues. Phosphoserine occurs at positions 50, 52, 58, 60, 62, and 64. Composition is skewed to acidic residues over residues Asp54–Ser64 and Glu84–Ala121. A represses p53/TP53 degradation region spans residues Leu636 to Tyr697.

Belongs to the UTP25 family. In terms of assembly, interacts with CAPN3; the interaction is required for CAPN3 translocation to the nucleolus. Phosphorylated. Phosphorylation is required to promote p53/TP53 degradation in the nucleolus which promotes cell cycle progression and liver development. As to expression, expressed in colon.

Its subcellular location is the nucleus. The protein localises to the nucleolus. In terms of biological role, component of the ribosomal small subunit processome for the biogenesis of ribosomes, functions in pre-ribosomal RNA (pre-rRNA) processing. Essential for embryonic development in part through the regulation of p53 pathway. Controls the expansion growth of digestive organs and liver. Also involved in the sympathetic neuronal development. Mediates, with CAPN3, the proteasome-independent degradation of p53/TP53. The polypeptide is U3 small nucleolar RNA-associated protein 25 homolog (Homo sapiens (Human)).